The chain runs to 208 residues: Outer-membrane lipoprotein LolB (208 aa).

The signal sequence occupies residues 1–23; it reads MKPIQKLSLFRLLPLSCVLLLTA. The N-palmitoyl cysteine moiety is linked to residue cysteine 24. Cysteine 24 carries the S-diacylglycerol cysteine lipid modification.

The protein belongs to the LolB family. Monomer.

It localises to the cell outer membrane. Functionally, plays a critical role in the incorporation of lipoproteins in the outer membrane after they are released by the LolA protein. The sequence is that of Outer-membrane lipoprotein LolB from Photorhabdus laumondii subsp. laumondii (strain DSM 15139 / CIP 105565 / TT01) (Photorhabdus luminescens subsp. laumondii).